The chain runs to 33 residues: MNSELLIQLGSLTLITLTGPLIIGIIFIRKGNL.

A helical transmembrane segment spans residues 7–27; sequence IQLGSLTLITLTGPLIIGIIF.

This sequence belongs to the Psb30/Ycf12 family. In terms of assembly, PSII is composed of 1 copy each of membrane proteins PsbA, PsbB, PsbC, PsbD, PsbE, PsbF, PsbH, PsbI, PsbJ, PsbK, PsbL, PsbM, PsbT, PsbY, PsbZ, Psb30/Ycf12, peripheral proteins of the oxygen-evolving complex and a large number of cofactors. It forms dimeric complexes.

It localises to the plastid. It is found in the chloroplast thylakoid membrane. Functionally, a core subunit of photosystem II (PSII), probably helps stabilize the reaction center. This chain is Photosystem II reaction center protein Psb30, found in Euglena gracilis.